The sequence spans 90 residues: Acylphosphatase (90 aa).

The region spanning 4-90 (TVHLRITGHV…KGQYKDFRIY (87 aa)) is the Acylphosphatase-like domain. Catalysis depends on residues Arg19 and Asn37.

It belongs to the acylphosphatase family.

It carries out the reaction an acyl phosphate + H2O = a carboxylate + phosphate + H(+). This chain is Acylphosphatase (acyP), found in Caldanaerobacter subterraneus subsp. tengcongensis (strain DSM 15242 / JCM 11007 / NBRC 100824 / MB4) (Thermoanaerobacter tengcongensis).